The sequence spans 157 residues: UPF0262 protein Atu0536 (157 aa).

Belongs to the UPF0262 family.

This Agrobacterium fabrum (strain C58 / ATCC 33970) (Agrobacterium tumefaciens (strain C58)) protein is UPF0262 protein Atu0536.